The sequence spans 373 residues: Ras association domain-containing protein 7 (373 aa).

The 84-residue stretch at 6-89 (AAMELKVWVD…VQFVLRRTGP (84 aa)) folds into the Ras-associating domain. The disordered stretch occupies residues 122 to 150 (CEPRKTLTPEPAPSLSRPGPAAPVTPTPG). Coiled coils occupy residues 175 to 227 (WEQE…AAEA) and 248 to 297 (QERQ…QFIQ). Positions 300 to 356 (GAALPPPPRPDRGPPGTQGPLPPAREESLLGAPSESHAGAQPRPRGGPHDAELLEVA) are disordered.

As to quaternary structure, interacts with MAP2K7 and GTP-bound NRAS. Polyubiquitinated and degraded by the proteasome upon prolonged stress stimuli.

It is found in the cytoplasm. The protein localises to the cytoskeleton. It localises to the microtubule organizing center. Its subcellular location is the centrosome. Negatively regulates stress-induced JNK activation and apoptosis by promoting MAP2K7 phosphorylation and inhibiting its ability to activate JNK. Following prolonged stress, anti-apoptotic effect stops because of degradation of RASSF7 protein via the ubiquitin-proteasome pathway. Required for the activation of AURKB and chromosomal congression during mitosis where it stimulates microtubule polymerization. The chain is Ras association domain-containing protein 7 (RASSF7) from Homo sapiens (Human).